Reading from the N-terminus, the 245-residue chain is Actin-like protein 10 (245 aa).

Belongs to the actin family.

This Homo sapiens (Human) protein is Actin-like protein 10 (ACTL10).